A 98-amino-acid polypeptide reads, in one-letter code: NADH-ubiquinone oxidoreductase chain 4L (98 aa).

Transmembrane regions (helical) follow at residues 1 to 21 (MPPIYINIILAYTASLVGLLM), 29 to 49 (SLLCLEGMMLSLFILATILSL), and 61 to 81 (IILLIFAGCETAVGLALLVMI).

It belongs to the complex I subunit 4L family. In terms of assembly, core subunit of respiratory chain NADH dehydrogenase (Complex I) which is composed of 45 different subunits.

The protein resides in the mitochondrion inner membrane. The enzyme catalyses a ubiquinone + NADH + 5 H(+)(in) = a ubiquinol + NAD(+) + 4 H(+)(out). Functionally, core subunit of the mitochondrial membrane respiratory chain NADH dehydrogenase (Complex I) which catalyzes electron transfer from NADH through the respiratory chain, using ubiquinone as an electron acceptor. Part of the enzyme membrane arm which is embedded in the lipid bilayer and involved in proton translocation. This Galeopterus variegatus (Malayan flying lemur) protein is NADH-ubiquinone oxidoreductase chain 4L (MT-ND4L).